A 149-amino-acid chain; its full sequence is Transcriptional repressor NrdR (149 aa).

A zinc finger lies at 3–34 (CPFCGNRDTNVRDSRSVNEGTFIKRRRFCGEC). In terms of domain architecture, ATP-cone spans 49-139 (IKVIKKNGSC…VYMNFENEKD (91 aa)).

Belongs to the NrdR family. The cofactor is Zn(2+).

Its function is as follows. Negatively regulates transcription of bacterial ribonucleotide reductase nrd genes and operons by binding to NrdR-boxes. This chain is Transcriptional repressor NrdR, found in Neorickettsia sennetsu (strain ATCC VR-367 / Miyayama) (Ehrlichia sennetsu).